The sequence spans 405 residues: Probable tRNA sulfurtransferase (405 aa).

One can recognise a THUMP domain in the interval 60–165; it reads TEVDKRLKKV…QDAVYISNQL (106 aa). Residues 183-184, 208-209, arginine 265, glycine 287, and glutamine 296 each bind ATP; these read ML and HF.

Belongs to the ThiI family.

The protein localises to the cytoplasm. It catalyses the reaction [ThiI sulfur-carrier protein]-S-sulfanyl-L-cysteine + a uridine in tRNA + 2 reduced [2Fe-2S]-[ferredoxin] + ATP + H(+) = [ThiI sulfur-carrier protein]-L-cysteine + a 4-thiouridine in tRNA + 2 oxidized [2Fe-2S]-[ferredoxin] + AMP + diphosphate. The enzyme catalyses [ThiS sulfur-carrier protein]-C-terminal Gly-Gly-AMP + S-sulfanyl-L-cysteinyl-[cysteine desulfurase] + AH2 = [ThiS sulfur-carrier protein]-C-terminal-Gly-aminoethanethioate + L-cysteinyl-[cysteine desulfurase] + A + AMP + 2 H(+). It participates in cofactor biosynthesis; thiamine diphosphate biosynthesis. Its function is as follows. Catalyzes the ATP-dependent transfer of a sulfur to tRNA to produce 4-thiouridine in position 8 of tRNAs, which functions as a near-UV photosensor. Also catalyzes the transfer of sulfur to the sulfur carrier protein ThiS, forming ThiS-thiocarboxylate. This is a step in the synthesis of thiazole, in the thiamine biosynthesis pathway. The sulfur is donated as persulfide by IscS. This Lactobacillus acidophilus (strain ATCC 700396 / NCK56 / N2 / NCFM) protein is Probable tRNA sulfurtransferase.